A 576-amino-acid chain; its full sequence is Proline--tRNA ligase (576 aa).

Belongs to the class-II aminoacyl-tRNA synthetase family. ProS type 1 subfamily. Homodimer.

The protein resides in the cytoplasm. The catalysed reaction is tRNA(Pro) + L-proline + ATP = L-prolyl-tRNA(Pro) + AMP + diphosphate. Functionally, catalyzes the attachment of proline to tRNA(Pro) in a two-step reaction: proline is first activated by ATP to form Pro-AMP and then transferred to the acceptor end of tRNA(Pro). As ProRS can inadvertently accommodate and process non-cognate amino acids such as alanine and cysteine, to avoid such errors it has two additional distinct editing activities against alanine. One activity is designated as 'pretransfer' editing and involves the tRNA(Pro)-independent hydrolysis of activated Ala-AMP. The other activity is designated 'posttransfer' editing and involves deacylation of mischarged Ala-tRNA(Pro). The misacylated Cys-tRNA(Pro) is not edited by ProRS. In Psychrobacter sp. (strain PRwf-1), this protein is Proline--tRNA ligase.